Reading from the N-terminus, the 237-residue chain is Bax inhibitor 1 (237 aa).

Over Met1–Lys29 the chain is Cytoplasmic. A Glycyl lysine isopeptide (Lys-Gly) (interchain with G-Cter in ubiquitin) cross-link involves residue Lys7. A helical transmembrane segment spans residues Val30–Val50. Over Thr51–Arg52 the chain is Lumenal. Residues Phe53–Ala73 traverse the membrane as a helical segment. Residues Thr74–Gly86 are Cytoplasmic-facing. The chain crosses the membrane as a helical span at residues Leu87–Ile107. Residues Ala108 to Ser112 are Lumenal-facing. The chain crosses the membrane as a helical span at residues Ile113 to Leu133. At Tyr134–Ser139 the chain is on the cytoplasmic side. Residues Tyr140 to Gly160 form a helical membrane-spanning segment. Topologically, residues Asn161–Ser166 are lumenal. Residues Ile167–Phe187 form a helical membrane-spanning segment. Over Asp188 to His206 the chain is Cytoplasmic. Positions Cys207–Phe227 form an intramembrane region, helical. The Cytoplasmic segment spans residues Asn228–Lys237.

It belongs to the BI1 family. Interacts with BCL2 and BCL2L1. Interacts with ERN1. Post-translationally, ubiquitinated by BFAR, leading to proteasomal degradation. In terms of tissue distribution, highly abundant in adult testis.

The protein resides in the endoplasmic reticulum membrane. Functionally, endoplasmic reticulum (ER)-resident protein that confers cellular protection as an anti-apoptotic protein by limiting multiple stress-inducing pathways surrounding the endoplasmic reticulum and mitochondria. Inhibits the activities of the key sensor for the endoplasmic reticulum unfolded protein response IRE1alpha/ERN1 both directly and by blocking BAX/BAK binding. Modulates ER calcium homeostasis by acting as a calcium-leak channel. Negatively regulates autophagy and autophagosome formation, especially during periods of nutrient deprivation, and reduces cell survival during starvation. The polypeptide is Bax inhibitor 1 (Tmbim6) (Rattus norvegicus (Rat)).